Here is a 270-residue protein sequence, read N- to C-terminus: Bis(5'-nucleosyl)-tetraphosphatase, symmetrical (270 aa).

Belongs to the Ap4A hydrolase family.

It carries out the reaction P(1),P(4)-bis(5'-adenosyl) tetraphosphate + H2O = 2 ADP + 2 H(+). Functionally, hydrolyzes diadenosine 5',5'''-P1,P4-tetraphosphate to yield ADP. The chain is Bis(5'-nucleosyl)-tetraphosphatase, symmetrical from Cellvibrio japonicus (strain Ueda107) (Pseudomonas fluorescens subsp. cellulosa).